We begin with the raw amino-acid sequence, 101 residues long: uncharacterized protein (101 aa).

Positions 39 to 74 (CDERHGRPLPHSQESQHGSATSKKAVRGTADTAPLE) are disordered. The segment covering 50-60 (SQESQHGSATS) has biased composition (polar residues).

This is an uncharacterized protein from Homo sapiens (Human).